The chain runs to 466 residues: MKNSGSIQESTSSTGISVLIVLALGFLMATLDVTVVNVAMADMKNTLSMSLSGVTWVVDGYILTFASLLLAGGALADRFGSKTIYILGLAVFVMASCLCAASINGQMLIAGRLIQGIGAALFMPSSLSLLAASYLDERARARMFGLWAALVSAASALGPFIGGVLVQLAGWQSIFLINVPIGAAALISAYRILSRVPGKSSRVNIIGHLLGMMALGFLSYALIQGPSAGWRSPVILVAFTAAVLAFVLFLLREISAKTPILPASLYKNGRFSAAQFIGFLLNFALFGGMFMLSLFLQEAGGASSFMAGVELLPMMAVFVIGNLLFARLANRFEAGQLMFVSMAVSCIIALLLFVLISPDFPYWQLAVLMSVMNLCTGITVPAMTTVIMQAAGQRHTNIAGAALNANRQIGALVGVAITGVIIHLSATWYAGAGFAFLMMGAAYSLAALLVWLFLAAHNGTAASEKM.

The next 14 membrane-spanning stretches (helical) occupy residues 16–36, 56–76, 83–103, 113–133, 146–166, 168–188, 203–223, 234–254, 276–296, 305–325, 337–357, 367–387, 409–429, and 434–454; these read ISVL…VTVV, WVVD…GALA, TIYI…AASI, LIQG…LAAS, LWAA…GVLV, LAGW…ALIS, VNII…YALI, VILV…LREI, FIGF…SLFL, FMAG…NLLF, LMFV…VLIS, VLMS…TTVI, IGAL…ATWY, and FAFL…WLFL.

It belongs to the major facilitator superfamily. EmrB family.

Its subcellular location is the cell membrane. Its function is as follows. Resistance to the epoxide antibiotic methylenomycin. The sequence is that of Methylenomycin A resistance protein (mmr) from Bacillus subtilis (strain 168).